Reading from the N-terminus, the 481-residue chain is Aspartyl/glutamyl-tRNA(Asn/Gln) amidotransferase subunit B (481 aa).

It belongs to the GatB/GatE family. GatB subfamily. In terms of assembly, heterotrimer of A, B and C subunits.

It carries out the reaction L-glutamyl-tRNA(Gln) + L-glutamine + ATP + H2O = L-glutaminyl-tRNA(Gln) + L-glutamate + ADP + phosphate + H(+). The enzyme catalyses L-aspartyl-tRNA(Asn) + L-glutamine + ATP + H2O = L-asparaginyl-tRNA(Asn) + L-glutamate + ADP + phosphate + 2 H(+). Its function is as follows. Allows the formation of correctly charged Asn-tRNA(Asn) or Gln-tRNA(Gln) through the transamidation of misacylated Asp-tRNA(Asn) or Glu-tRNA(Gln) in organisms which lack either or both of asparaginyl-tRNA or glutaminyl-tRNA synthetases. The reaction takes place in the presence of glutamine and ATP through an activated phospho-Asp-tRNA(Asn) or phospho-Glu-tRNA(Gln). This Pseudomonas aeruginosa (strain LESB58) protein is Aspartyl/glutamyl-tRNA(Asn/Gln) amidotransferase subunit B.